The chain runs to 270 residues: Pantoate kinase (270 aa).

Belongs to the GHMP kinase family. PoK subfamily.

It catalyses the reaction (R)-pantoate + ATP = (R)-4-phosphopantoate + ADP + H(+). It functions in the pathway cofactor biosynthesis; coenzyme A biosynthesis. Functionally, phosphorylates (R)-pantoate to form (R)-4-phosphopantoate in the CoA biosynthesis pathway. In Methanocaldococcus jannaschii (strain ATCC 43067 / DSM 2661 / JAL-1 / JCM 10045 / NBRC 100440) (Methanococcus jannaschii), this protein is Pantoate kinase.